Here is a 711-residue protein sequence, read N- to C-terminus: Receptor-like protein 43 (711 aa).

The first 30 residues, 1–30 (MKGFWNSKSTIRITLSFIFLFISQFSDVLA), serve as a signal peptide directing secretion. At 31–666 (APTRHLCRPE…EDEEVISWIA (636 aa)) the chain is on the extracellular side. Asparagine 78, asparagine 114, asparagine 143, asparagine 167, and asparagine 191 each carry an N-linked (GlcNAc...) asparagine glycan. 8 LRR repeats span residues 120–143 (LHFL…SIEN), 144–168 (LSHL…IGNL), 170–192 (HLTF…IGNL), 193–216 (SHLT…IGGL), 218–240 (HLTT…IGNL), 241–266 (SNLT…NLSQ), 268–288 (TRLD…LWTL), and 289–316 (PNLF…SMGH). 4 N-linked (GlcNAc...) asparagine glycosylation sites follow: asparagine 239, asparagine 242, asparagine 252, and asparagine 263. Residues asparagine 295, asparagine 323, asparagine 347, asparagine 362, and asparagine 372 are each glycosylated (N-linked (GlcNAc...) asparagine). Residues 317 to 334 (LLGSNNNFTGKIPSFICE) form an LRR 9; degenerate repeat. LRR repeat units follow at residues 335 to 358 (LRSL…CMGN), 360 to 384 (KSNL…IFEI), 386 to 406 (RSLD…LRFF), 407 to 430 (STLE…LTSL), 431 to 452 (PKLQ…EASF), 453 to 476 (LKLR…YFVK), 519 to 543 (LTIY…IGLL), 544 to 567 (KELL…MGKL), 568 to 591 (TALE…IGNL), and 593 to 616 (FLSC…QFLT). N-linked (GlcNAc...) asparagine glycosylation is present at asparagine 420. An N-linked (GlcNAc...) asparagine glycan is attached at asparagine 466. Asparagine 550, asparagine 590, and asparagine 598 each carry an N-linked (GlcNAc...) asparagine glycan. The chain crosses the membrane as a helical span at residues 667–687 (AAIGFIPGIVLGLTIGYILVF). The Cytoplasmic portion of the chain corresponds to 688 to 711 (YKPEWFIKTFGRNNCRRRSTTTTH).

The protein belongs to the RLP family.

Its subcellular location is the cell membrane. The protein is Receptor-like protein 43 of Arabidopsis thaliana (Mouse-ear cress).